We begin with the raw amino-acid sequence, 373 residues long: Glutamate 5-kinase (373 aa).

Residue lysine 15 participates in ATP binding. Residues serine 55, aspartate 142, and asparagine 154 each contribute to the substrate site. Residues threonine 174 to aspartate 175 and threonine 216 to lysine 222 contribute to the ATP site. The region spanning serine 281–lysine 359 is the PUA domain.

This sequence belongs to the glutamate 5-kinase family.

The protein resides in the cytoplasm. It carries out the reaction L-glutamate + ATP = L-glutamyl 5-phosphate + ADP. Its pathway is amino-acid biosynthesis; L-proline biosynthesis; L-glutamate 5-semialdehyde from L-glutamate: step 1/2. In terms of biological role, catalyzes the transfer of a phosphate group to glutamate to form L-glutamate 5-phosphate. The sequence is that of Glutamate 5-kinase from Geobacter sulfurreducens (strain ATCC 51573 / DSM 12127 / PCA).